Reading from the N-terminus, the 890-residue chain is DNA mismatch repair protein MutS (890 aa).

Residue 634 to 641 coordinates ATP; that stretch reads GPNMGGKS.

It belongs to the DNA mismatch repair MutS family.

In terms of biological role, this protein is involved in the repair of mismatches in DNA. It is possible that it carries out the mismatch recognition step. This protein has a weak ATPase activity. In Burkholderia pseudomallei (strain K96243), this protein is DNA mismatch repair protein MutS.